The sequence spans 1002 residues: DNA-directed RNA polymerase 1, mitochondrial (1002 aa).

The transit peptide at 1–21 directs the protein to the mitochondrion; sequence MWRYISKQAYSRKFRNSHDSA. Catalysis depends on residues D703, K778, and D935.

This sequence belongs to the phage and mitochondrial RNA polymerase family. As to expression, the highest levels of expression are detected in the mature leaves. The level of expression is lowest in the cotyledons.

It is found in the mitochondrion. The catalysed reaction is RNA(n) + a ribonucleoside 5'-triphosphate = RNA(n+1) + diphosphate. DNA-dependent RNA polymerase catalyzes the transcription of DNA into RNA using the four ribonucleoside triphosphates as substrates. In Nicotiana sylvestris (Wood tobacco), this protein is DNA-directed RNA polymerase 1, mitochondrial (RPOT1).